A 332-amino-acid polypeptide reads, in one-letter code: Galactosylgalactosylxylosylprotein 3-beta-glucuronosyltransferase 1 (332 aa).

Residues Met-1–Asp-6 are Cytoplasmic-facing. The interval Lys-3–Arg-5 is essential for transport from endoplasmic reticulum to Golgi apparatus and interaction with SAR1A. The helical; Signal-anchor for type II membrane protein transmembrane segment at Ile-7–Ser-27 threads the bilayer. The Lumenal segment spans residues Thr-28 to Ile-332. Residue Pro-91 to Tyr-93 coordinates UDP-alpha-D-glucuronate. Phosphothreonine is present on residues Thr-103 and Thr-108. Asp-122 lines the UDP-alpha-D-glucuronate pocket. N-linked (GlcNAc...) asparagine glycosylation occurs at Asn-140. UDP-alpha-D-glucuronate-binding residues include Arg-165 and Arg-170. N-linked (GlcNAc...) asparagine glycosylation is present at Asn-184. A UDP-alpha-D-glucuronate-binding site is contributed by Asp-195–Asp-197. A Mn(2+)-binding site is contributed by Asp-197. An interaction with galactose moiety of substrate glycoprotein region spans residues Phe-243–Asp-252. Glu-282 acts as the Proton donor/acceptor in catalysis. N-linked (GlcNAc...) asparagine glycosylation is present at Asn-301. His-309–Arg-311 contacts UDP-alpha-D-glucuronate.

It belongs to the glycosyltransferase 43 family. As to quaternary structure, homodimer. Interacts with SAR1A. Requires Mn(2+) as cofactor. In terms of processing, the soluble form derives from the membrane form by proteolytic processing.

It localises to the golgi apparatus membrane. Its subcellular location is the secreted. The catalysed reaction is 3-O-(beta-D-galactosyl-(1-&gt;3)-beta-D-galactosyl-(1-&gt;4)-beta-D-xylosyl)-L-seryl-[protein] + UDP-alpha-D-glucuronate = 3-O-(beta-D-GlcA-(1-&gt;3)-beta-D-Gal-(1-&gt;3)-beta-D-Gal-(1-&gt;4)-beta-D-Xyl)-L-seryl-[protein] + UDP + H(+). The protein operates within protein modification; protein glycosylation. Its function is as follows. Involved in the biosynthesis of L2/HNK-1 carbohydrate epitope on glycoproteins. Can also play a role in glycosaminoglycan biosynthesis. Substrates include asialo-orosomucoid (ASOR), asialo-fetuin, and asialo-neural cell adhesion molecule. Requires sphingomyelin for activity: stearoyl-sphingomyelin was the most effective, followed by palmitoyl-sphingomyelin and lignoceroyl-sphingomyelin. Activity was demonstrated only for sphingomyelin with a saturated fatty acid and not for that with an unsaturated fatty acid, regardless of the length of the acyl group. The chain is Galactosylgalactosylxylosylprotein 3-beta-glucuronosyltransferase 1 from Pan troglodytes (Chimpanzee).